The following is a 436-amino-acid chain: UPF0597 protein YhaM (436 aa).

This sequence belongs to the UPF0597 family.

The sequence is that of UPF0597 protein YhaM from Escherichia coli (strain SE11).